Consider the following 150-residue polypeptide: Deoxyuridine 5'-triphosphate nucleotidohydrolase (150 aa).

Residues 69 to 71, Asn82, and 86 to 88 contribute to the substrate site; these read RSG and LID.

It belongs to the dUTPase family. The cofactor is Mg(2+).

It carries out the reaction dUTP + H2O = dUMP + diphosphate + H(+). It functions in the pathway pyrimidine metabolism; dUMP biosynthesis; dUMP from dCTP (dUTP route): step 2/2. Functionally, this enzyme is involved in nucleotide metabolism: it produces dUMP, the immediate precursor of thymidine nucleotides and it decreases the intracellular concentration of dUTP so that uracil cannot be incorporated into DNA. This is Deoxyuridine 5'-triphosphate nucleotidohydrolase from Chromobacterium violaceum (strain ATCC 12472 / DSM 30191 / JCM 1249 / CCUG 213 / NBRC 12614 / NCIMB 9131 / NCTC 9757 / MK).